Here is a 414-residue protein sequence, read N- to C-terminus: Serine--tRNA ligase (414 aa).

230–232 lines the L-serine pocket; sequence TAE. 261–263 is a binding site for ATP; sequence RKE. Glu284 serves as a coordination point for L-serine. 348-351 is a binding site for ATP; the sequence is EISS. Ser382 contributes to the L-serine binding site.

The protein belongs to the class-II aminoacyl-tRNA synthetase family. Type-1 seryl-tRNA synthetase subfamily. As to quaternary structure, homodimer. The tRNA molecule binds across the dimer.

It localises to the cytoplasm. It carries out the reaction tRNA(Ser) + L-serine + ATP = L-seryl-tRNA(Ser) + AMP + diphosphate + H(+). The enzyme catalyses tRNA(Sec) + L-serine + ATP = L-seryl-tRNA(Sec) + AMP + diphosphate + H(+). It functions in the pathway aminoacyl-tRNA biosynthesis; selenocysteinyl-tRNA(Sec) biosynthesis; L-seryl-tRNA(Sec) from L-serine and tRNA(Sec): step 1/1. Its function is as follows. Catalyzes the attachment of serine to tRNA(Ser). Is also able to aminoacylate tRNA(Sec) with serine, to form the misacylated tRNA L-seryl-tRNA(Sec), which will be further converted into selenocysteinyl-tRNA(Sec). This chain is Serine--tRNA ligase, found in Sulfurovum sp. (strain NBC37-1).